Consider the following 449-residue polypeptide: Probable phosphoglucosamine mutase (449 aa).

The Phosphoserine intermediate role is filled by S96. Mg(2+)-binding residues include S96, D233, D235, and D237. S96 carries the phosphoserine modification.

This sequence belongs to the phosphohexose mutase family. The cofactor is Mg(2+). In terms of processing, activated by phosphorylation.

The enzyme catalyses alpha-D-glucosamine 1-phosphate = D-glucosamine 6-phosphate. Functionally, catalyzes the conversion of glucosamine-6-phosphate to glucosamine-1-phosphate. This Thermococcus gammatolerans (strain DSM 15229 / JCM 11827 / EJ3) protein is Probable phosphoglucosamine mutase.